A 49-amino-acid polypeptide reads, in one-letter code: Large ribosomal subunit protein bL33 (49 aa).

It belongs to the bacterial ribosomal protein bL33 family.

This Clostridium beijerinckii (strain ATCC 51743 / NCIMB 8052) (Clostridium acetobutylicum) protein is Large ribosomal subunit protein bL33.